We begin with the raw amino-acid sequence, 254 residues long: Switch-activating protein 1 (254 aa).

Residues M1 to S10 are compositionally biased toward basic and acidic residues. A disordered region spans residues M1–T30. Residues A16–A25 are compositionally biased toward low complexity. Residues S17 and S19 each carry the phosphoserine modification. 4 tandem repeats follow at residues G221–M224, G225–M228, G229–M232, and G233–M236. A 4 X 4 AA tandem repeats of G-[ATV]-N-M region spans residues G221–M236.

As to quaternary structure, homodimer.

The protein localises to the nucleus. In terms of biological role, binds to sequences required for mating-type switching. Makes a simultaneous contact with both the alpha and beta domains of the switch-activating site SAS1. Also binds to replication fork barrier 1 (RFB1) located within a 78 base pair sequence near the 3' end of the rRNA coding region. This leads to replication fork blockage. It binds the consensus sequence 5'-TA[AG]GCAGNTN[CT]AACG[AC]G-3'. Its function is as follows. Has a role in chromosome organization and integrity where it is involved in chromosome segregation. Has a role in sister chromatid cohesion and condensation. The chain is Switch-activating protein 1 (sap1) from Schizosaccharomyces pombe (strain 972 / ATCC 24843) (Fission yeast).